Consider the following 579-residue polypeptide: ATP-dependent lipid A-core flippase (579 aa).

5 helical membrane passes run 24–44 (FALS…LPAL), 63–83 (WVPL…FIST), 150–170 (VLGL…IVFA), 251–271 (VIQF…AGQA), and 275–295 (TTTV…FAPL). The ABC transmembrane type-1 domain maps to 25–307 (ALSIVGLILT…LTAVNDQLQR (283 aa)). Positions 339 to 575 (LAFRDVGLTY…QGRYAQLHAL (237 aa)) constitute an ABC transporter domain. 373-380 (GASGSGKT) serves as a coordination point for ATP.

It belongs to the ABC transporter superfamily. Lipid exporter (TC 3.A.1.106) family. In terms of assembly, homodimer.

The protein resides in the cell inner membrane. It carries out the reaction ATP + H2O + lipid A-core oligosaccharideSide 1 = ADP + phosphate + lipid A-core oligosaccharideSide 2.. In terms of biological role, involved in lipopolysaccharide (LPS) biosynthesis. Translocates lipid A-core from the inner to the outer leaflet of the inner membrane. Transmembrane domains (TMD) form a pore in the inner membrane and the ATP-binding domain (NBD) is responsible for energy generation. The sequence is that of ATP-dependent lipid A-core flippase from Thiobacillus denitrificans (strain ATCC 25259 / T1).